We begin with the raw amino-acid sequence, 394 residues long: MAGAAMAERGRVPPPAPAPSTEGLPRAFLQSLRTLFDILDDRRRGCVHLREIESRWQGTDARELPRGVLEGLRQVAPASGYLTFERFVAGLRTSLLSADGGPRDPTRAPARPGDQPPPPPQRLVFAPADEPRTVLERKPLPLGVRAPLAGPSAAARSPEQLCAPAEAAPCPAEPERSQSAALEPSSSADAGAVACRALEADSGDARRAPRARGERRRHTIASGVDCGLLKQMKELEQEKEVLLQGLEMMARGRDWYQQQLQRVQERQRRLGQSRASADFGAAGSPRPLGRLLPKVQEVARCLGELLAAACASRALPPSSSGPPCPALTSTSPPVWQQQTILMLKEQNRLLTQEVTEKSERITQLEQEKSALIKQLFEARALSQQDGGPLDSTFI.

Disordered stretches follow at residues 1 to 23 (MAGA…STEG), 95 to 125 (LLSA…RLVF), and 150 to 188 (GPSA…SSSA). Residues 177–188 (SQSAALEPSSSA) show a composition bias toward polar residues. Thr219 is subject to Phosphothreonine. A coiled-coil region spans residues 227–277 (GLLKQMKELEQEKEVLLQGLEMMARGRDWYQQQLQRVQERQRRLGQSRASA). The residue at position 284 (Ser284) is a Phosphoserine. The stretch at 336–384 (QQQTILMLKEQNRLLTQEVTEKSERITQLEQEKSALIKQLFEARALSQQ) forms a coiled coil.

Interacts with a spindle orientation complex at least composed of GNAI1, GPSM2 and NUMA1. Interacts with GPSM2 (via TPR motifs); this interaction is required to prevent GPSM2 anchoring at the mitotic apical cortex and is inhibited in presence of NUMA1 in a dose dependent manner. Interacts with PARD3. As to expression, expressed in 5-month-old fetal tissues, including stomach, intestine, colon, liver, brain, lung, heart, spleen and kidney. Undetectable in non-cancerous adult tissues. Expressed in many primary gastric carcinoma, but almost not in adjacent normal mucosa. Expressed preferentially in M and G1 phases, compared to S and G2 phases. Expression is up-regulated in hepatocellular carcinoma (HCC) and colorectal cancer (CRC) tissues (at protein level).

Its subcellular location is the cytoplasm. It localises to the nucleus. The protein resides in the cell cortex. The protein localises to the apical cell membrane. It is found in the cell junction. Its subcellular location is the tight junction. Plays a role in planar mitotic spindle orientation in retinal progenitor cells (RPCs) and promotes the production of symmetric terminal divisions. Negatively regulates the mitotic apical cortex localization of GPSM2. Involved also in positive regulation of cell proliferation and tumor cell growth. The chain is Suppressor APC domain-containing protein 2 from Homo sapiens (Human).